We begin with the raw amino-acid sequence, 199 residues long: Holliday junction branch migration complex subunit RuvA (199 aa).

Positions 1–64 are domain I; it reads MIALLTGKLA…EDAINLYGFR (64 aa). Positions 65–143 are domain II; it reads TMEEKEMFQL…KLGHGPLQQD (79 aa). The tract at residues 144–148 is flexible linker; that stretch reads VAPAD. Residues 149–199 form a domain III region; that stretch reads AHNDMRDDVVSALVNLGYKEAVVQKTVDEIGVAADATVESLLKQALKKLMK.

Belongs to the RuvA family. As to quaternary structure, homotetramer. Forms an RuvA(8)-RuvB(12)-Holliday junction (HJ) complex. HJ DNA is sandwiched between 2 RuvA tetramers; dsDNA enters through RuvA and exits via RuvB. An RuvB hexamer assembles on each DNA strand where it exits the tetramer. Each RuvB hexamer is contacted by two RuvA subunits (via domain III) on 2 adjacent RuvB subunits; this complex drives branch migration. In the full resolvosome a probable DNA-RuvA(4)-RuvB(12)-RuvC(2) complex forms which resolves the HJ.

The protein resides in the cytoplasm. In terms of biological role, the RuvA-RuvB-RuvC complex processes Holliday junction (HJ) DNA during genetic recombination and DNA repair, while the RuvA-RuvB complex plays an important role in the rescue of blocked DNA replication forks via replication fork reversal (RFR). RuvA specifically binds to HJ cruciform DNA, conferring on it an open structure. The RuvB hexamer acts as an ATP-dependent pump, pulling dsDNA into and through the RuvAB complex. HJ branch migration allows RuvC to scan DNA until it finds its consensus sequence, where it cleaves and resolves the cruciform DNA. The chain is Holliday junction branch migration complex subunit RuvA from Geotalea daltonii (strain DSM 22248 / JCM 15807 / FRC-32) (Geobacter daltonii).